The following is a 287-amino-acid chain: Small ribosomal subunit protein uS2 (287 aa).

The segment at 235 to 287 (ESGFATGGGDWEATAPAAASGWDDAAAQPQNWDSAAQGAASWDEAAAPKEGQW) is disordered. The segment covering 247–261 (ATAPAAASGWDDAAA) has biased composition (low complexity).

Belongs to the universal ribosomal protein uS2 family. Component of the small ribosomal subunit. Mature ribosomes consist of a small (40S) and a large (60S) subunit. The 40S subunit contains about 33 different proteins and 1 molecule of RNA (18S). The 60S subunit contains about 49 different proteins and 3 molecules of RNA (25S, 5.8S and 5S). Interacts with RPS21.

It localises to the cytoplasm. Its function is as follows. Required for the assembly and/or stability of the 40S ribosomal subunit. Required for the processing of the 20S rRNA-precursor to mature 18S rRNA in a late step of the maturation of 40S ribosomal subunits. The polypeptide is Small ribosomal subunit protein uS2 (Pyricularia oryzae (strain 70-15 / ATCC MYA-4617 / FGSC 8958) (Rice blast fungus)).